Consider the following 305-residue polypeptide: Beta-lactamase (305 aa).

Positions 1–34 form a signal peptide, tat-type signal; that stretch reads MGTTGARPSRRAVLTAAAGAAVAGIPLGGSTAFA. The active-site Acyl-ester intermediate is the serine 82. 250–252 provides a ligand contact to substrate; that stretch reads KTG.

The protein belongs to the class-A beta-lactamase family. Post-translationally, predicted to be exported by the Tat system. The position of the signal peptide cleavage has not been experimentally proven.

The enzyme catalyses a beta-lactam + H2O = a substituted beta-amino acid. The sequence is that of Beta-lactamase from Streptomyces lavendulae.